We begin with the raw amino-acid sequence, 150 residues long: Regulatory protein RecX (150 aa).

Belongs to the RecX family.

The protein localises to the cytoplasm. Functionally, modulates RecA activity. The protein is Regulatory protein RecX of Ectopseudomonas mendocina (strain ymp) (Pseudomonas mendocina).